The following is a 236-amino-acid chain: Purine nucleoside phosphorylase DeoD-type (236 aa).

His-5 provides a ligand contact to a purine D-ribonucleoside. Phosphate-binding positions include Gly-21, Arg-25, Arg-44, and 88 to 91; that span reads RVGT. A purine D-ribonucleoside contacts are provided by residues 180 to 182 and 204 to 205; these read EME and SD. Asp-205 functions as the Proton donor in the catalytic mechanism.

This sequence belongs to the PNP/UDP phosphorylase family. In terms of assembly, homohexamer; trimer of homodimers.

The enzyme catalyses a purine D-ribonucleoside + phosphate = a purine nucleobase + alpha-D-ribose 1-phosphate. It carries out the reaction a purine 2'-deoxy-D-ribonucleoside + phosphate = a purine nucleobase + 2-deoxy-alpha-D-ribose 1-phosphate. Functionally, catalyzes the reversible phosphorolytic breakdown of the N-glycosidic bond in the beta-(deoxy)ribonucleoside molecules, with the formation of the corresponding free purine bases and pentose-1-phosphate. The polypeptide is Purine nucleoside phosphorylase DeoD-type (Shewanella loihica (strain ATCC BAA-1088 / PV-4)).